Reading from the N-terminus, the 280-residue chain is MTISVSVRQVVGPEDAARRNTQGLRDGFVIEALFQPGRANLTYSHLDRMIVGGVVPAADRLVIDRVAETGTQRFLDRREAAIINIGGSGTVSVGDKDHVLGFQEALYVGMGGGALGFASDDANAPALFYVLSAPAHRSCPTVHITRDMAKKLSLGSAEESNARTINQYVHPDVCESCQLLVGLTMFEPGSVWNTMPAHVHDRRMEVYLYFGMQEATRIFHFMGEPGETRHVVLKNHEAVLSPGWSIHSGAGTGRYAFIWAMAGDNMSFTDMDKVPMEALR.

Positions 198, 200, 205, and 247 each coordinate Zn(2+).

Belongs to the KduI family. The cofactor is Zn(2+).

It carries out the reaction 5-dehydro-4-deoxy-D-glucuronate = 3-deoxy-D-glycero-2,5-hexodiulosonate. It functions in the pathway glycan metabolism; pectin degradation; 2-dehydro-3-deoxy-D-gluconate from pectin: step 4/5. Its function is as follows. Catalyzes the isomerization of 5-dehydro-4-deoxy-D-glucuronate to 3-deoxy-D-glycero-2,5-hexodiulosonate. The sequence is that of 4-deoxy-L-threo-5-hexosulose-uronate ketol-isomerase 1 (kduI1) from Rhizobium meliloti (strain 1021) (Ensifer meliloti).